Consider the following 164-residue polypeptide: MVNSVVFFEITRDGKPLGRISIKLFADKIPKTAENFRALSTGEKGFRYKGSCFHRIIPGFMCQGGDFTRPNGTGDKSIYGEKFDDENLIRKHTGSGILSMANAGPNTNGSQFFICAAKTEWLDGKHVAFGKVKERVNIVEAMEHFGYRNSKTSKKITIADCGQF.

Residues 7–163 enclose the PPIase cyclophilin-type domain; that stretch reads FFEITRDGKP…KKITIADCGQ (157 aa).

The protein belongs to the cyclophilin-type PPIase family. PPIase A subfamily.

It localises to the cytoplasm. The catalysed reaction is [protein]-peptidylproline (omega=180) = [protein]-peptidylproline (omega=0). Its function is as follows. PPIases accelerate the folding of proteins. It catalyzes the cis-trans isomerization of proline imidic peptide bonds in oligopeptides. The chain is Peptidyl-prolyl cis-trans isomerase A-like 4F from Homo sapiens (Human).